The sequence spans 98 residues: uncharacterized protein (98 aa).

The span at 1–21 (MTTSPTTISTTTAATTTTTTP) shows a compositional bias: low complexity. The disordered stretch occupies residues 1–26 (MTTSPTTISTTTAATTTTTTPGKGTD). The chain crosses the membrane as a helical span at residues 29-49 (MVYIEAMLFSMLVLILLIIVC).

The protein localises to the host membrane. This is an uncharacterized protein from Equine herpesvirus 2 (strain 86/87) (EHV-2).